The following is a 28-amino-acid chain: Ranatuerin-2LTa (28 aa).

A disulfide bridge links Cys-23 with Cys-28.

Expressed by the skin glands.

The protein localises to the secreted. Functionally, has antibacterial activity. This is Ranatuerin-2LTa from Rana latastei (Italian agile frog).